We begin with the raw amino-acid sequence, 523 residues long: 3-hydroxybenzoate--CoA ligase (523 aa).

The protein belongs to the ATP-dependent AMP-binding enzyme family. Benzoate-CoA ligase subfamily.

The catalysed reaction is 3-hydroxybenzoate + ATP + CoA = 3-hydroxybenzoyl-CoA + AMP + diphosphate. It catalyses the reaction 4-hydroxybenzoate + ATP + CoA = 4-hydroxybenzoyl-CoA + AMP + diphosphate. Ligase involved in the anaerobic degradation of 3-hydroxybenzoate (3OHBz). Catalyzes the activation of 3-hydroxybenzoate to 3-hydroxybenzoyl-CoA. Also shows high activity with protocatechuate and 4-hydroxybenzoate. Exhibits lower activity with benzoate, but cannot use 2-hydroxybenzoate or benzoate analogs containing other substituents at the ortho position, such as 2-aminobenzoate (anthranilate). This chain is 3-hydroxybenzoate--CoA ligase, found in Aromatoleum sp. (strain CIB) (Azoarcus sp. (strain CIB)).